Here is a 201-residue protein sequence, read N- to C-terminus: Cysteine dioxygenase type 1 (201 aa).

Residues His-86, His-88, and His-141 each contribute to the Fe cation site. The 3'-(S-cysteinyl)-tyrosine (Cys-Tyr) cross-link spans 93–158 (CFLKLLQGQL…TEPAVSLHLY (66 aa)).

This sequence belongs to the cysteine dioxygenase family. Monomer. The cofactor is Fe cation. Requires Ni(2+) as cofactor. It depends on Zn(2+) as a cofactor. In terms of processing, the thioether cross-link between Cys-93 and Tyr-158 plays a structural role through stabilizing the Fe(2+) ion, and prevents the production of highly damaging free hydroxyl radicals by holding the oxygen radical via hydroxyl hydrogen.

The enzyme catalyses L-cysteine + O2 = 3-sulfino-L-alanine + H(+). Its pathway is organosulfur biosynthesis; taurine biosynthesis; hypotaurine from L-cysteine: step 1/2. Its function is as follows. Catalyzes the oxidation of cysteine to cysteine sulfinic acid with addition of molecular dioxygen. This is Cysteine dioxygenase type 1 (cdo1) from Danio rerio (Zebrafish).